We begin with the raw amino-acid sequence, 398 residues long: Gastric triacylglycerol lipase (398 aa).

The first 19 residues, 1–19, serve as a signal peptide directing secretion; that stretch reads MWLLLTMASLISVLGTTHG. Asn34 and Asn99 each carry an N-linked (GlcNAc...) asparagine glycan. An AB hydrolase-1 domain is found at 78 to 377; the sequence is PVVFLQHGLL…PFYNHLDFIW (300 aa). Ser172 (nucleophile) is an active-site residue. A disulfide bridge connects residues Cys246 and Cys255. N-linked (GlcNAc...) asparagine glycans are attached at residues Asn271 and Asn327. Residues Asp343 and His372 each act as charge relay system in the active site.

This sequence belongs to the AB hydrolase superfamily. Lipase family.

It localises to the secreted. It carries out the reaction a triacylglycerol + H2O = a diacylglycerol + a fatty acid + H(+). The catalysed reaction is 1,2,3-tri-(9Z-octadecenoyl)-glycerol + H2O = 1,2-di-(9Z-octadecenoyl)-sn-glycerol + (9Z)-octadecenoate + H(+). It catalyses the reaction 1,2,3-trioctanoylglycerol + H2O = 1,2-dioctanoyl-sn-glycerol + octanoate + H(+). Functionally, catalyzes the hydrolysis of triacylglycerols to yield free fatty acids, diacylglycerol, monoacylglycerol, and glycerol. Shows a preferential hydrolysis at the sn-3 position of triacylglycerol. The protein is Gastric triacylglycerol lipase (LIPF) of Homo sapiens (Human).